A 476-amino-acid polypeptide reads, in one-letter code: tRNA(Ile)-lysidine synthase (476 aa).

30–35 (SGGPDS) contributes to the ATP binding site.

The protein belongs to the tRNA(Ile)-lysidine synthase family.

It is found in the cytoplasm. The enzyme catalyses cytidine(34) in tRNA(Ile2) + L-lysine + ATP = lysidine(34) in tRNA(Ile2) + AMP + diphosphate + H(+). Ligates lysine onto the cytidine present at position 34 of the AUA codon-specific tRNA(Ile) that contains the anticodon CAU, in an ATP-dependent manner. Cytidine is converted to lysidine, thus changing the amino acid specificity of the tRNA from methionine to isoleucine. This Bacillus cereus (strain ATCC 10987 / NRS 248) protein is tRNA(Ile)-lysidine synthase.